A 341-amino-acid chain; its full sequence is L-threonine 3-dehydrogenase (341 aa).

C38 provides a ligand contact to Zn(2+). Catalysis depends on charge relay system residues T40 and H43. H63, E64, C93, C96, C99, and C107 together coordinate Zn(2+). NAD(+)-binding positions include I175, D195, R200, 262–264, and 286–287; these read LGI and IY.

Belongs to the zinc-containing alcohol dehydrogenase family. As to quaternary structure, homotetramer. The cofactor is Zn(2+).

The protein localises to the cytoplasm. The enzyme catalyses L-threonine + NAD(+) = (2S)-2-amino-3-oxobutanoate + NADH + H(+). The protein operates within amino-acid degradation; L-threonine degradation via oxydo-reductase pathway; glycine from L-threonine: step 1/2. Functionally, catalyzes the NAD(+)-dependent oxidation of L-threonine to 2-amino-3-ketobutyrate. The protein is L-threonine 3-dehydrogenase of Serratia proteamaculans (strain 568).